A 710-amino-acid polypeptide reads, in one-letter code: ATP-dependent RNA helicase DBP7 (710 aa).

The interval 1–97 (MSDNDGLMLM…KDVPPQPANA (97 aa)) is disordered. Polar residues predominate over residues 11 to 21 (NFTTESGPDNA). A compositionally biased stretch (low complexity) spans 54-68 (PAAAVEEAPAAAVPE). Residues 134–163 (DTFEALGVRGTLLEHLTGKMKIQKPTKIQK) carry the Q motif motif. One can recognise a Helicase ATP-binding domain in the interval 167 to 361 (PEVLNGKADL…DIALTDPKVI (195 aa)). 180–187 (AQTGSGKT) is an ATP binding site. Residues 296 to 299 (DEGD) carry the DEAD box motif. One can recognise a Helicase C-terminal domain in the interval 396–588 (AISELSRKAP…LLAPAFAAPV (193 aa)). The tract at residues 669-690 (PKGMAAHRGKPATPKPKQDDAR) is disordered.

Belongs to the DEAD box helicase family. DDX31/DBP7 subfamily.

Its subcellular location is the nucleus. The protein localises to the nucleolus. The catalysed reaction is ATP + H2O = ADP + phosphate + H(+). Functionally, ATP-binding RNA helicase involved in the biogenesis of 60S ribosomal subunits and is required for the normal formation of 25S and 5.8S rRNAs. This is ATP-dependent RNA helicase DBP7 (DBP7) from Eremothecium gossypii (strain ATCC 10895 / CBS 109.51 / FGSC 9923 / NRRL Y-1056) (Yeast).